The following is a 424-amino-acid chain: Type II methyltransferase M.XorII (424 aa).

One can recognise an SAM-dependent MTase C5-type domain in the interval 4–367 (PIGIDLFAGA…GQIMKALRKK (364 aa)). Residue C83 is part of the active site. The disordered stretch occupies residues 404–424 (RSRPVDRPAPRRHEERELVTA). Over residues 406–424 (RPVDRPAPRRHEERELVTA) the composition is skewed to basic and acidic residues.

The protein belongs to the class I-like SAM-binding methyltransferase superfamily. C5-methyltransferase family.

It catalyses the reaction a 2'-deoxycytidine in DNA + S-adenosyl-L-methionine = a 5-methyl-2'-deoxycytidine in DNA + S-adenosyl-L-homocysteine + H(+). A methylase that recognizes the double-stranded sequence 5'-CGATCG-3', methylates C-? on both strands and protects the DNA from cleavage by the XorII endonuclease. The polypeptide is Type II methyltransferase M.XorII (xorIIM) (Xanthomonas oryzae pv. oryzae (strain KACC10331 / KXO85)).